The following is a 382-amino-acid chain: ATP phosphoribosyltransferase regulatory subunit (382 aa).

It belongs to the class-II aminoacyl-tRNA synthetase family. HisZ subfamily. As to quaternary structure, heteromultimer composed of HisG and HisZ subunits.

It is found in the cytoplasm. It participates in amino-acid biosynthesis; L-histidine biosynthesis; L-histidine from 5-phospho-alpha-D-ribose 1-diphosphate: step 1/9. Functionally, required for the first step of histidine biosynthesis. May allow the feedback regulation of ATP phosphoribosyltransferase activity by histidine. This Burkholderia lata (strain ATCC 17760 / DSM 23089 / LMG 22485 / NCIMB 9086 / R18194 / 383) protein is ATP phosphoribosyltransferase regulatory subunit.